The sequence spans 124 residues: Basic leucine zipper transcriptional factor ATF-like (124 aa).

The segment covering 1-23 (MAQGSDNNDTSYTKSPSPGNKQG) has biased composition (polar residues). The interval 1–60 (MAQGSDNNDTSYTKSPSPGNKQGSSDDMRKVMRREKNRIAAQKSRMRQTQKADSLHLESE) is disordered. The bZIP domain occupies 27-90 (DMRKVMRREK…KYLSTVLSNH (64 aa)). The interval 29–51 (RKVMRREKNRIAAQKSRMRQTQK) is basic motif. The tract at residues 55 to 83 (LHLESESLEKENAALRKEVKRLTEEAKYL) is leucine-zipper.

It belongs to the bZIP family.

The protein localises to the nucleus. It localises to the cytoplasm. Its function is as follows. AP-1 family transcription factor that controls the differentiation of lineage-specific cells in the immune system: specifically mediates the differentiation of T-helper 17 cells (Th17), follicular T-helper cells (TfH), CD8(+) dendritic cells and class-switch recombination (CSR) in B-cells. The protein is Basic leucine zipper transcriptional factor ATF-like (batf) of Danio rerio (Zebrafish).